A 100-amino-acid chain; its full sequence is Urease subunit gamma (100 aa).

The protein belongs to the urease gamma subunit family. Heterotrimer of UreA (gamma), UreB (beta) and UreC (alpha) subunits. Three heterotrimers associate to form the active enzyme.

It localises to the cytoplasm. It carries out the reaction urea + 2 H2O + H(+) = hydrogencarbonate + 2 NH4(+). It functions in the pathway nitrogen metabolism; urea degradation; CO(2) and NH(3) from urea (urease route): step 1/1. The sequence is that of Urease subunit gamma from Pseudomonas aeruginosa (strain UCBPP-PA14).